A 382-amino-acid chain; its full sequence is MGDWSALGKLLDKVQAYSTAGGKVWLSVLFIFRILLLGTAVESAWGDEQSAFRCNTQQPGCENVCYDKSFPISHVRFWVLQIIFVSVPTLLYLAHVFYVMRKEEKLNKKEEELKVAQTDGVNVDMHLKQIEIKKFKYGIEEHGKVKMRGGLLRTYIISILFKSIFEVAFLLIQWYIYGFSLSAVYTCKRDPCPHQVDCFLSRPTEKTIFIIFMLVVSLVSLALNIIELFYVFFKGVKDRVKGKSDPYHATSGALSPAKDCGSQKYAYFNGCSSPTAPLSPMSPPGYKLVTGDRNNSSCRNYNKQASEQNWANYSAEQNRMGQAGSTISNSHAQPFDFPDDNQNSKKLAAGHELQPLAIVDQRPSSRASSRASSRPRPDDLEI.

Residues G2–K23 lie on the Cytoplasmic side of the membrane. S5 carries the post-translational modification Phosphoserine. The helical transmembrane segment at V24 to A44 threads the bilayer. At W45–R76 the chain is on the extracellular side. 2 disulfides stabilise this stretch: C54–C192 and C187–C198. A helical membrane pass occupies residues F77 to F97. Topologically, residues Y98–Y155 are cytoplasmic. K144 participates in a covalent cross-link: Glycyl lysine isopeptide (Lys-Gly) (interchain with G-Cter in SUMO). Residues I156–I176 traverse the membrane as a helical segment. Over Y177–T207 the chain is Extracellular. A helical membrane pass occupies residues I208 to L228. The Cytoplasmic portion of the chain corresponds to F229 to I382. K237 is covalently cross-linked (Glycyl lysine isopeptide (Lys-Gly) (interchain with G-Cter in SUMO)). The tract at residues S244–I382 is interaction with NOV. Y247 carries the phosphotyrosine modification. 2 positions are modified to phosphoserine: S255 and S262. The tract at residues K264–I382 is interaction with UBQLN4. C271 is modified (S-nitrosocysteine). At T275 the chain carries Phosphothreonine. Residues S306 and S314 each carry the phosphoserine modification. Positions Q317–A332 are enriched in polar residues. The segment at Q317–I382 is disordered. S325 carries the phosphoserine; by CK1 modification. Position 326 is a phosphothreonine (T326). Phosphoserine; by CK1 is present on residues S328 and S330. A phosphoserine mark is found at S344 and S365. The segment covering R362–R374 has biased composition (low complexity). S368 carries the post-translational modification Phosphoserine; by PKC/PRKCG and PKC/PRKCD. A phosphoserine mark is found at S369 and S373.

The protein belongs to the connexin family. Alpha-type (group II) subfamily. A connexon is composed of a hexamer of connexins. Interacts (via C-terminus) with TJP1. Interacts (via C-terminus) with SRC (via SH3 domain). Interacts (not ubiquitinated) with UBQLN4 (via UBA domain). Interacts with SGSM3 and CNST. Interacts with RIC1/CIP150. Interacts with CSNK1D. Interacts with NOV. Interacts with TMEM65. Interacts with ANK3/ANKG and PKP2. Post-translationally, phosphorylated at Ser-368 by PRKCG; phosphorylation induces disassembly of gap junction plaques and inhibition of gap junction activity. Phosphorylation at Ser-325, Ser-328 and Ser-330 by CK1 modulates gap junction assembly. Phosphorylation at Ser-368 by PRKCD triggers its internalization into small vesicles leading to proteasome-mediated degradation. In terms of processing, sumoylated with SUMO1, SUMO2 and SUMO3, which may regulate the level of functional Cx43 gap junctions at the plasma membrane. May be desumoylated by SENP1 or SENP2. S-nitrosylation at Cys-271 is enriched at the muscle endothelial gap junction in arteries, it augments channel permeability and may regulate of smooth muscle cell to endothelial cell communication. Post-translationally, acetylated in the developing cortex; leading to delocalization from the cell membrane. As to expression, expressed at intercalated disks in the heart (at protein level). Expressed in the fetal cochlea.

The protein localises to the cell membrane. It localises to the cell junction. Its subcellular location is the gap junction. The protein resides in the endoplasmic reticulum. Its function is as follows. Gap junction protein that acts as a regulator of bladder capacity. A gap junction consists of a cluster of closely packed pairs of transmembrane channels, the connexons, through which materials of low MW diffuse from one cell to a neighboring cell. May play a critical role in the physiology of hearing by participating in the recycling of potassium to the cochlear endolymph. Negative regulator of bladder functional capacity: acts by enhancing intercellular electrical and chemical transmission, thus sensitizing bladder muscles to cholinergic neural stimuli and causing them to contract. May play a role in cell growth inhibition through the regulation of NOV expression and localization. Plays an essential role in gap junction communication in the ventricles. This Homo sapiens (Human) protein is Gap junction alpha-1 protein (GJA1).